The sequence spans 218 residues: Glutathione S-transferase Mu 1 (218 aa).

In terms of domain architecture, GST N-terminal spans 2–88; the sequence is PMILGYWDIR…YIARKHNLCG (87 aa). Residue 7–8 coordinates glutathione; sequence YW. Residue threonine 34 is modified to Phosphothreonine. Residues 43–46, lysine 50, 59–60, and 72–73 each bind glutathione; these read RSQW, NL, and QS. A GST C-terminal domain is found at 90 to 208; sequence TEEEKIRVDI…KSSRFLPRPV (119 aa). Tyrosine 116 contributes to the substrate binding site. Phosphoserine is present on serine 210.

Belongs to the GST superfamily. Mu family. As to quaternary structure, homodimer. As to expression, liver (at protein level).

It localises to the cytoplasm. The enzyme catalyses RX + glutathione = an S-substituted glutathione + a halide anion + H(+). It carries out the reaction prostaglandin A2 + glutathione = prostaglandin A2-S-(R)-glutathione. It catalyses the reaction prostaglandin J2 + glutathione = prostaglandin J2-S-(R)-glutathione. The catalysed reaction is prostaglandin J2 + glutathione = prostaglandin J2-S-(S)-glutathione. The enzyme catalyses prostaglandin A2 + glutathione = prostaglandin A2-S-(S)-glutathione. It carries out the reaction 11(S)-hydroxy-14(S),15(S)-epoxy-(5Z,8Z,12E)-eicosatrienoate + glutathione = (11S,15S)-dihydroxy-14(R)-S-glutathionyl-(5Z,8Z,12E)-eicosatrienoate. In terms of biological role, conjugation of reduced glutathione to a wide number of exogenous and endogenous hydrophobic electrophiles. Involved in the formation of glutathione conjugates of both prostaglandin A2 (PGA2) and prostaglandin J2 (PGJ2). Participates in the formation of novel hepoxilin regioisomers. The sequence is that of Glutathione S-transferase Mu 1 from Homo sapiens (Human).